Reading from the N-terminus, the 68-residue chain is Probable tautomerase Cj0270 (68 aa).

Catalysis depends on Pro2, which acts as the Proton acceptor; via imino nitrogen.

This sequence belongs to the 4-oxalocrotonate tautomerase family.

This chain is Probable tautomerase Cj0270, found in Campylobacter jejuni subsp. jejuni serotype O:2 (strain ATCC 700819 / NCTC 11168).